Consider the following 198-residue polypeptide: Segregation and condensation protein B (198 aa).

The segment at 169–198 is disordered; the sequence is LADPAAEEPDQNEMDLFFDRFNQSKEQEEE.

This sequence belongs to the ScpB family. In terms of assembly, homodimer. Homodimerization may be required to stabilize the binding of ScpA to the Smc head domains. Component of a cohesin-like complex composed of ScpA, ScpB and the Smc homodimer, in which ScpA and ScpB bind to the head domain of Smc. The presence of the three proteins is required for the association of the complex with DNA.

It localises to the cytoplasm. Functionally, participates in chromosomal partition during cell division. May act via the formation of a condensin-like complex containing Smc and ScpA that pull DNA away from mid-cell into both cell halves. The chain is Segregation and condensation protein B from Listeria monocytogenes serotype 4a (strain HCC23).